Consider the following 72-residue polypeptide: Large ribosomal subunit protein bL28 (72 aa).

This sequence belongs to the bacterial ribosomal protein bL28 family.

The sequence is that of Large ribosomal subunit protein bL28 from Chlorobium limicola (strain DSM 245 / NBRC 103803 / 6330).